A 259-amino-acid chain; its full sequence is Deoxyribose-phosphate aldolase (259 aa).

Asp-102 functions as the Proton donor/acceptor in the catalytic mechanism. Residue Lys-167 is the Schiff-base intermediate with acetaldehyde of the active site. Lys-201 acts as the Proton donor/acceptor in catalysis.

This sequence belongs to the DeoC/FbaB aldolase family. DeoC type 2 subfamily.

It is found in the cytoplasm. It catalyses the reaction 2-deoxy-D-ribose 5-phosphate = D-glyceraldehyde 3-phosphate + acetaldehyde. It participates in carbohydrate degradation; 2-deoxy-D-ribose 1-phosphate degradation; D-glyceraldehyde 3-phosphate and acetaldehyde from 2-deoxy-alpha-D-ribose 1-phosphate: step 2/2. Catalyzes a reversible aldol reaction between acetaldehyde and D-glyceraldehyde 3-phosphate to generate 2-deoxy-D-ribose 5-phosphate. The sequence is that of Deoxyribose-phosphate aldolase from Salmonella dublin (strain CT_02021853).